The sequence spans 410 residues: Transcription factor Dp-1 (410 aa).

K3 carries the N6-acetyllysine modification. A Phosphoserine modification is found at S23. Residues 73–100 (SNTLVVGSPHTPSTHFASQNQPSDSSPW) show a composition bias toward polar residues. The disordered stretch occupies residues 73 to 116 (SNTLVVGSPHTPSTHFASQNQPSDSSPWSAGKRNRKGEKNGKGL). Over residues 104–116 (KRNRKGEKNGKGL) the composition is skewed to basic residues. Residues 105-127 (RNRKGEKNGKGLRHFSMKVCEKV) are interaction with CEBPA. A DNA-binding region spans residues 113 to 195 (GKGLRHFSMK…KKEIKWIGLP (83 aa)). Positions 161–195 (DQKNIRRRVYDALNVLMAMNIISKEKKEIKWIGLP) match the DEF box motif. Residues 204–277 (NLEVERQRRL…KKTVIDCSIS (74 aa)) are dimerization. The enhances binding of RB protein to E2F stretch occupies residues 211–327 (RRLERIKQKQ…DLKMARSLVP (117 aa)). The interval 214–246 (ERIKQKQSQLQELILQQIAFKNLVQRNRHAEQQ) is DCB1. Positions 259 to 315 (LPFIIVNTSKKTVIDCSISNDKFEYLFNFDNTFEIHDDIEVLKRMGMACGLESGSCS) are DCB2. A disordered region spans residues 370–410 (GMLATSSNGSQYSGSRVETPVSYVGEDDEEDDDFNENDEDD). Over residues 373-385 (ATSSNGSQYSGSR) the composition is skewed to polar residues. Acidic residues predominate over residues 394 to 410 (GEDDEEDDDFNENDEDD).

The protein belongs to the E2F/DP family. Component of the E2F:DP transcription factor complex. Forms heterodimers with E2F family members. The complex can interact with hypophosphorylated retinoblastoma protein RB1 and related proteins (RBL1 and RBL2) that inhibit the E2F transactivation domain. This repression involves recruitment of histone deacetylase (HDAC). During the cell cycle, from mid-to-late G1 phase, RB family members become phosphorylated, detach from the DRTF1/E2F complex to render E2F transcriptionally active. Viral oncoproteins, notably E1A, T-antigen and HPV E7, are capable of sequestering RB protein, thus releasing the active complex. Part of the E2F6.com-1 complex in G0 phase is composed of E2F6, MGA, MAX, TFDP1, CBX3, BAT8, EUHMTASE1, RING1, RNF2, MBLR, L3MBTL2 YAF2. Component of the DREAM complex (also named LINC complex) at least composed of E2F4, E2F5, LIN9, LIN37, LIN52, LIN54, MYBL1, MYBL2, RBL1, RBL2, RBBP4, TFDP1 and TFDP2. The complex exists in quiescent cells where it represses cell cycle-dependent genes. It dissociates in S phase when LIN9, LIN37, LIN52 and LIN54 form a subcomplex that binds to MYBL2. The complex TFDP1:E2F1 interacts with CEBPA; the interaction prevents CEBPA binding to target gene promoters and represses its transcriptional activity. In terms of processing, phosphorylation by E2F1-bound cyclin A-CDK2, in the S phase, inhibits E2F-mediated DNA binding and transactivation. Post-translationally, ubiquitinated by the BCR(KBTBD5) complex, leading to its subsequent degradation. As to expression, highest levels in muscle. Also expressed in brain, placenta, liver and kidney. Lower levels in lung and pancreas. Not detected in heart.

The protein localises to the nucleus. It localises to the cytoplasm. Functionally, can stimulate E2F-dependent transcription. Binds DNA cooperatively with E2F family members through the E2 recognition site, 5'-TTTC[CG]CGC-3', found in the promoter region of a number of genes whose products are involved in cell cycle regulation or in DNA replication. The E2F1:DP complex appears to mediate both cell proliferation and apoptosis. Blocks adipocyte differentiation by repressing CEBPA binding to its target gene promoters. The chain is Transcription factor Dp-1 (TFDP1) from Homo sapiens (Human).